A 711-amino-acid polypeptide reads, in one-letter code: Retrovirus-related Pol polyprotein from type-1 retrotransposable element R2 (711 aa).

The 279-residue stretch at 45 to 323 folds into the Reverse transcriptase domain; it reads LHLLRGHVPT…QTFRYLGHFF (279 aa). The nucleic acid-binding endonuclease stretch occupies residues 444 to 711; sequence LFSCPSFDHL…RAVWSRQAGA (268 aa).

The catalysed reaction is DNA(n) + a 2'-deoxyribonucleoside 5'-triphosphate = DNA(n+1) + diphosphate. This Popillia japonica (Japanese beetle) protein is Retrovirus-related Pol polyprotein from type-1 retrotransposable element R2.